A 104-amino-acid polypeptide reads, in one-letter code: Large ribosomal subunit protein bL21 (104 aa).

It belongs to the bacterial ribosomal protein bL21 family. Part of the 50S ribosomal subunit. Contacts protein L20.

Functionally, this protein binds to 23S rRNA in the presence of protein L20. This is Large ribosomal subunit protein bL21 from Pseudomonas putida (strain W619).